Here is a 146-residue protein sequence, read N- to C-terminus: Phospholipase A2 OS2 (146 aa).

The N-terminal stretch at 1 to 27 is a signal peptide; that stretch reads MHPAHLLVLLAVCVSLLGASDIPPLPL. Disulfide bonds link cysteine 38–cysteine 99, cysteine 54–cysteine 145, cysteine 56–cysteine 72, cysteine 71–cysteine 126, cysteine 78–cysteine 119, cysteine 88–cysteine 112, and cysteine 106–cysteine 117. Residues tyrosine 55, glycine 57, and glycine 59 each coordinate Ca(2+). Histidine 75 is an active-site residue. A Ca(2+)-binding site is contributed by aspartate 76. Aspartate 120 is a catalytic residue.

The protein belongs to the phospholipase A2 family. Group I subfamily. D49 sub-subfamily. In terms of assembly, monomer. Requires Ca(2+) as cofactor. In terms of tissue distribution, expressed by the venom gland.

It localises to the secreted. The enzyme catalyses a 1,2-diacyl-sn-glycero-3-phosphocholine + H2O = a 1-acyl-sn-glycero-3-phosphocholine + a fatty acid + H(+). In terms of biological role, snake venom phospholipase A2 (PLA2) that shows high presynaptic neurotoxicity in vertebrata that is independent of catalytic activity, as well as local myotoxicity when intramuscularly injected into mice. Blocks acetylcholine release in Aplysia neurons, and potentiates pro-inflammatory cellular signaling. Potentiates glutamate excitoxicity when coinjected into brain of rats. May act by binding in a calcium-dependent fashion and with high affinity to a neuronal-type (N-type) PLA2 receptor, and with very high affinity to a muscle-type (M-type) PLA2 receptor. In vitro, shows a high-specific activity on E.coli membranes and is more efficient on the anionic phospholipid POPG than on the anionic phospholipid POPS or the zwitterionic phospholipid POPC. Exerts catalytically-independent anti-HIV (IC(50) is 35 nM) activity and catalytically-dependent antimalarial activity (IC(50) is 3.1 nM when tested on P.falciparum grown in serum that contains lipoproteins). PLA2 catalyzes the calcium-dependent hydrolysis of the 2-acyl groups in 3-sn-phosphoglycerides. In Oxyuranus scutellatus scutellatus (Australian taipan), this protein is Phospholipase A2 OS2.